A 327-amino-acid chain; its full sequence is Microtubule-associated protein RP/EB family member 2 (327 aa).

Polar residues predominate over residues 1-17 (MPGPTQTLSPNGENNND). The disordered stretch occupies residues 1 to 20 (MPGPTQTLSPNGENNNDVIH). Residues 56-158 (TMSRHDIIAW…FIQWFKKFFD (103 aa)) enclose the Calponin-homology (CH) domain. Disordered regions lie at residues 170-238 (EARQ…DKDL) and 295-327 (LYSS…QEEY). Positions 234 to 304 (SDKDLETQVS…LYSSEEQESH (71 aa)) constitute an EB1 C-terminal domain.

The protein belongs to the MAPRE family.

It is found in the cytoplasm. It localises to the cytoskeleton. In terms of biological role, may be involved in microtubule polymerization, and spindle function by stabilizing microtubules and anchoring them at centrosomes. In Xenopus laevis (African clawed frog), this protein is Microtubule-associated protein RP/EB family member 2 (mapre2).